A 319-amino-acid chain; its full sequence is Cytochrome c biogenesis protein CcsA (319 aa).

Helical transmembrane passes span 9–29 (ILTH…LITL), 44–64 (GMIV…ASSG), 68–88 (LSNL…LHTI), 143–163 (MLLS…ILII), 223–243 (VISL…VWAN), 257–271 (TWAF…IYLH), and 286–306 (VASI…LLGI).

This sequence belongs to the CcmF/CycK/Ccl1/NrfE/CcsA family. As to quaternary structure, may interact with Ccs1.

The protein localises to the plastid. The protein resides in the chloroplast thylakoid membrane. Functionally, required during biogenesis of c-type cytochromes (cytochrome c6 and cytochrome f) at the step of heme attachment. This chain is Cytochrome c biogenesis protein CcsA, found in Agrostis stolonifera (Creeping bentgrass).